The sequence spans 176 residues: Peptide methionine sulfoxide reductase MsrA (176 aa).

The active site involves Cys10.

It belongs to the MsrA Met sulfoxide reductase family.

The enzyme catalyses L-methionyl-[protein] + [thioredoxin]-disulfide + H2O = L-methionyl-(S)-S-oxide-[protein] + [thioredoxin]-dithiol. It catalyses the reaction [thioredoxin]-disulfide + L-methionine + H2O = L-methionine (S)-S-oxide + [thioredoxin]-dithiol. Its function is as follows. Has an important function as a repair enzyme for proteins that have been inactivated by oxidation. Catalyzes the reversible oxidation-reduction of methionine sulfoxide in proteins to methionine. This chain is Peptide methionine sulfoxide reductase MsrA, found in Sulfolobus acidocaldarius (strain ATCC 33909 / DSM 639 / JCM 8929 / NBRC 15157 / NCIMB 11770).